Reading from the N-terminus, the 750-residue chain is K(+)-insensitive pyrophosphate-energized proton pump (750 aa).

5 consecutive transmembrane segments (helical) span residues 1 to 21, 51 to 71, 78 to 98, 133 to 153, and 161 to 181; these read MYGL…YQGI, FIII…GGLN, VVFI…VAWF, IGML…LFIP, and FIGF…AGGI. Lys-184 provides a ligand contact to substrate. Residues Asp-187, Asp-191, and Asp-216 each contribute to the Mg(2+) site. 6 consecutive transmembrane segments (helical) span residues 227-247, 257-277, 301-321, 327-347, 391-411, and 420-440; these read DGFE…LLAI, LVWI…SYWV, LVWL…YMLI, GTMW…GALI, WMGL…TLGL, and VFAF…TIAV. Asp-448 is a binding site for Mg(2+). Transmembrane regions (helical) follow at residues 503-523, 538-558, 607-627, and 629-649; these read VLIG…IMIL, ILWP…YWFT, GMIN…CLES, and LFIG…IFMA. Ca(2+) contacts are provided by Asp-656, Asp-681, and Asp-685. Residue Lys-688 participates in substrate binding. The next 2 helical transmembrane spans lie at 694 to 714 and 716 to 736; these read ALNP…ELAI and LPTT…LVFV.

This sequence belongs to the H(+)-translocating pyrophosphatase (TC 3.A.10) family. K(+)-insensitive subfamily. As to quaternary structure, homodimer. Mg(2+) is required as a cofactor.

Its subcellular location is the cell inner membrane. The catalysed reaction is diphosphate + H2O + H(+)(in) = 2 phosphate + 2 H(+)(out). In terms of biological role, proton pump that utilizes the energy of pyrophosphate hydrolysis as the driving force for proton movement across the membrane. Generates a proton motive force. The sequence is that of K(+)-insensitive pyrophosphate-energized proton pump from Chlorobaculum tepidum (strain ATCC 49652 / DSM 12025 / NBRC 103806 / TLS) (Chlorobium tepidum).